Consider the following 726-residue polypeptide: Fatty acid oxidation complex subunit alpha (726 aa).

The enoyl-CoA hydratase/isomerase stretch occupies residues 1–189; the sequence is MIYQGENLSV…KIGMVDGIVS (189 aa). Residue aspartate 296 participates in substrate binding. A 3-hydroxyacyl-CoA dehydrogenase region spans residues 311–726; that stretch reads EPVKNAAVLG…PKSSVSSPSV (416 aa). NAD(+)-binding positions include methionine 324, aspartate 343, 400 to 402, lysine 407, and serine 429; that span reads VVE. Histidine 450 acts as the For 3-hydroxyacyl-CoA dehydrogenase activity in catalysis. Asparagine 453 is a binding site for NAD(+). 2 residues coordinate substrate: asparagine 500 and tyrosine 660.

The protein in the N-terminal section; belongs to the enoyl-CoA hydratase/isomerase family. This sequence in the C-terminal section; belongs to the 3-hydroxyacyl-CoA dehydrogenase family. Heterotetramer of two alpha chains (FadB) and two beta chains (FadA).

It catalyses the reaction a (3S)-3-hydroxyacyl-CoA + NAD(+) = a 3-oxoacyl-CoA + NADH + H(+). The enzyme catalyses a (3S)-3-hydroxyacyl-CoA = a (2E)-enoyl-CoA + H2O. The catalysed reaction is a 4-saturated-(3S)-3-hydroxyacyl-CoA = a (3E)-enoyl-CoA + H2O. It carries out the reaction (3S)-3-hydroxybutanoyl-CoA = (3R)-3-hydroxybutanoyl-CoA. It catalyses the reaction a (3Z)-enoyl-CoA = a 4-saturated (2E)-enoyl-CoA. The enzyme catalyses a (3E)-enoyl-CoA = a 4-saturated (2E)-enoyl-CoA. It participates in lipid metabolism; fatty acid beta-oxidation. Functionally, involved in the aerobic and anaerobic degradation of long-chain fatty acids via beta-oxidation cycle. Catalyzes the formation of 3-oxoacyl-CoA from enoyl-CoA via L-3-hydroxyacyl-CoA. It can also use D-3-hydroxyacyl-CoA and cis-3-enoyl-CoA as substrate. The protein is Fatty acid oxidation complex subunit alpha of Aliivibrio salmonicida (strain LFI1238) (Vibrio salmonicida (strain LFI1238)).